We begin with the raw amino-acid sequence, 311 residues long: Pyrimidine-specific ribonucleoside hydrolase RihA (311 aa).

Histidine 240 is a catalytic residue.

This sequence belongs to the IUNH family. RihA subfamily.

Its function is as follows. Hydrolyzes cytidine or uridine to ribose and cytosine or uracil, respectively. This chain is Pyrimidine-specific ribonucleoside hydrolase RihA, found in Salmonella choleraesuis (strain SC-B67).